A 164-amino-acid chain; its full sequence is ATP synthase subunit b (164 aa).

Residues 10–32 (SAAMLMLFVLMVYFLNKFLYTPF) traverse the membrane as a helical segment.

This sequence belongs to the ATPase B chain family. In terms of assembly, F-type ATPases have 2 components, F(1) - the catalytic core - and F(0) - the membrane proton channel. F(1) has five subunits: alpha(3), beta(3), gamma(1), delta(1), epsilon(1). F(0) has three main subunits: a(1), b(2) and c(10-14). The alpha and beta chains form an alternating ring which encloses part of the gamma chain. F(1) is attached to F(0) by a central stalk formed by the gamma and epsilon chains, while a peripheral stalk is formed by the delta and b chains.

It is found in the cell inner membrane. Functionally, f(1)F(0) ATP synthase produces ATP from ADP in the presence of a proton or sodium gradient. F-type ATPases consist of two structural domains, F(1) containing the extramembraneous catalytic core and F(0) containing the membrane proton channel, linked together by a central stalk and a peripheral stalk. During catalysis, ATP synthesis in the catalytic domain of F(1) is coupled via a rotary mechanism of the central stalk subunits to proton translocation. Component of the F(0) channel, it forms part of the peripheral stalk, linking F(1) to F(0). This chain is ATP synthase subunit b, found in Thermotoga maritima (strain ATCC 43589 / DSM 3109 / JCM 10099 / NBRC 100826 / MSB8).